The following is a 189-amino-acid chain: Parkinson disease protein 7 homolog (189 aa).

Ala-2 carries the N-acetylalanine modification. 2 S-palmitoyl cysteine lipidation sites follow: Cys-46 and Cys-53. Tyr-67 is subject to Phosphotyrosine. Cys-106 functions as the Nucleophile in the catalytic mechanism. Cys-106 is modified (cysteine sulfinic acid (-SO2H); alternate). Cys-106 is lipidated: S-palmitoyl cysteine; alternate. His-126 is a catalytic residue. Residue Lys-130 forms a Glycyl lysine isopeptide (Lys-Gly) (interchain with G-Cter in SUMO) linkage. An N6-acetyllysine modification is found at Lys-148. Residue Lys-182 is modified to N6-succinyllysine.

Belongs to the peptidase C56 family. In terms of assembly, homodimer. Binds EFCAB6/DJBP and PIAS2. Part of a ternary complex containing PARK7, EFCAB6/DJBP and AR. Interacts (via N-terminus) with OTUD7B. Interacts with BBS1, HIPK1, CLCF1 and MTERF. Forms a complex with PINK1 and PRKN. Interacts (via C-terminus) with NCF1; the interaction is enhanced by LPS and modulates NCF1 phosphorylation and membrane translocation. Interacts with NENF. Requires Deglycase activity does not require glutathione as a cofactor, however, glycated glutathione constitutes a PARK7 substrate. as cofactor. In terms of processing, sumoylated on Lys-130 by PIAS2 or PIAS4; which is essential for cell-growth promoting activity and transforming activity. Post-translationally, undergoes cleavage of a C-terminal peptide and subsequent activation of protease activity in response to oxidative stress. Ubiquitous. Detected on epididymal sperm. Highly expressed in testis and prostate. Detected at lower levels in heart, lung, brain, liver, kidney, seminal vesicle, caput and corpus epididymis.

It localises to the cell membrane. The protein resides in the cytoplasm. It is found in the membrane raft. Its subcellular location is the nucleus. The protein localises to the mitochondrion. It localises to the endoplasmic reticulum. The enzyme catalyses N(omega)-(1-hydroxy-2-oxopropyl)-L-arginyl-[protein] + H2O = lactate + L-arginyl-[protein] + H(+). It carries out the reaction N(6)-(1-hydroxy-2-oxopropyl)-L-lysyl-[protein] + H2O = lactate + L-lysyl-[protein] + H(+). The catalysed reaction is S-(1-hydroxy-2-oxopropyl)-L-cysteinyl-[protein] + H2O = lactate + L-cysteinyl-[protein] + H(+). It catalyses the reaction N(omega)-(1-hydroxy-2-oxoethyl)-L-arginyl-[protein] + H2O = L-arginyl-[protein] + glycolate + H(+). The enzyme catalyses N(6)-(1-hydroxy-2-oxoethyl)-L-lysyl-[protein] + H2O = glycolate + L-lysyl-[protein] + H(+). It carries out the reaction S-(1-hydroxy-2-oxoethyl)-L-cysteinyl-[protein] + H2O = glycolate + L-cysteinyl-[protein] + H(+). The catalysed reaction is N(2)-(1-hydroxy-2-oxopropyl)-dGTP + H2O = lactate + dGTP + H(+). It catalyses the reaction N(2)-(1-hydroxy-2-oxopropyl)-GTP + H2O = lactate + GTP + H(+). The enzyme catalyses N(2)-(1-hydroxy-2-oxopropyl)-GDP + H2O = lactate + GDP + H(+). It carries out the reaction N(2)-(1-hydroxy-2-oxopropyl)-GMP + H2O = lactate + GMP + H(+). The catalysed reaction is N(2)-(1-hydroxy-2-oxoethyl)-dGTP + H2O = dGTP + glycolate + H(+). It catalyses the reaction N(2)-(1-hydroxy-2-oxoethyl)-GTP + H2O = glycolate + GTP + H(+). The enzyme catalyses N(2)-(1-hydroxy-2-oxoethyl)-GDP + H2O = glycolate + GDP + H(+). It carries out the reaction N(2)-(1-hydroxy-2-oxoethyl)-GMP + H2O = glycolate + GMP + H(+). The catalysed reaction is an N(2)-(1-hydroxy-2-oxopropyl)-guanosine in RNA + H2O = a guanosine in RNA + lactate + H(+). It catalyses the reaction an N(2)-(1-hydroxy-2-oxopropyl)-2'-deoxyguanosine in DNA + H2O = a 2'-deoxyguanosine in DNA + lactate + H(+). The enzyme catalyses an N(2)-(1-hydroxy-2-oxoethyl)-guanosine in RNA + H2O = a guanosine in RNA + glycolate + H(+). It carries out the reaction an N(2)-(1-hydroxy-2-oxoethyl)-2'-deoxyguanosine in DNA + H2O = a 2'-deoxyguanosine in DNA + glycolate + H(+). Functionally, protein and nucleotide deglycase that catalyzes the deglycation of the Maillard adducts formed between amino groups of proteins or nucleotides and reactive carbonyl groups of glyoxals. Thus, functions as a protein deglycase that repairs methylglyoxal- and glyoxal-glycated proteins, and releases repaired proteins and lactate or glycolate, respectively. Deglycates cysteine, arginine and lysine residues in proteins, and thus reactivates these proteins by reversing glycation by glyoxals. Acts on early glycation intermediates (hemithioacetals and aminocarbinols), preventing the formation of advanced glycation endproducts (AGE) that cause irreversible damage. Also functions as a nucleotide deglycase able to repair glycated guanine in the free nucleotide pool (GTP, GDP, GMP, dGTP) and in DNA and RNA. Is thus involved in a major nucleotide repair system named guanine glycation repair (GG repair), dedicated to reversing methylglyoxal and glyoxal damage via nucleotide sanitization and direct nucleic acid repair. Also displays an apparent glyoxalase activity that in fact reflects its deglycase activity. Plays an important role in cell protection against oxidative stress and cell death acting as oxidative stress sensor and redox-sensitive chaperone and protease; functions probably related to its primary function. It is involved in neuroprotective mechanisms like the stabilization of NFE2L2 and PINK1 proteins, male fertility as a positive regulator of androgen signaling pathway as well as cell growth and transformation through, for instance, the modulation of NF-kappa-B signaling pathway. Eliminates hydrogen peroxide and protects cells against hydrogen peroxide-induced cell death. Required for correct mitochondrial morphology and function as well as for autophagy of dysfunctional mitochondria. Plays a role in regulating expression or stability of the mitochondrial uncoupling proteins SLC25A14 and SLC25A27 in dopaminergic neurons of the substantia nigra pars compacta and attenuates the oxidative stress induced by calcium entry into the neurons via L-type channels during pacemaking. Regulates astrocyte inflammatory responses, may modulate lipid rafts-dependent endocytosis in astrocytes and neuronal cells. In pancreatic islets, involved in the maintenance of mitochondrial reactive oxygen species (ROS) levels and glucose homeostasis in an age- and diet dependent manner. Protects pancreatic beta cells from cell death induced by inflammatory and cytotoxic setting. Binds to a number of mRNAs containing multiple copies of GG or CC motifs and partially inhibits their translation but dissociates following oxidative stress. Metal-binding protein able to bind copper as well as toxic mercury ions, enhances the cell protection mechanism against induced metal toxicity. In macrophages, interacts with the NADPH oxidase subunit NCF1 to direct NADPH oxidase-dependent ROS production, and protects against sepsis. This is Parkinson disease protein 7 homolog from Rattus norvegicus (Rat).